Consider the following 517-residue polypeptide: Ubiquitin carboxyl-terminal hydrolase 30 (517 aa).

The Mitochondrial intermembrane segment spans residues 1–35; sequence MLSSRAEAAMTAADRAIQRFLRTGAAVRYKVMKNW. The helical transmembrane segment at 36 to 56 threads the bilayer; that stretch reads GVIGGIAAALAAGIYVIWGPI. Topologically, residues 57–517 are cytoplasmic; sequence TERKKRRKGL…HQSQECKSEE (461 aa). One can recognise a USP domain in the interval 68-502; that stretch reads PGLVNLGNTC…SAYLLFYERV (435 aa). Cys77 functions as the Nucleophile in the catalytic mechanism. Glycyl lysine isopeptide (Lys-Gly) (interchain with G-Cter in ubiquitin) cross-links involve residues Lys235 and Lys289. A disordered region spans residues 364–395; it reads SQHNPKLNKNPGPTLELQDGPGAPTPVLNQPG. His452 acts as the Proton acceptor in catalysis.

It belongs to the peptidase C19 family. Post-translationally, ubiquitinated by parkin (PRKN) at Lys-235 and Lys-289, leading to its degradation. Expressed in skeletal muscle, pancreas, liver and kidney.

Its subcellular location is the mitochondrion outer membrane. It carries out the reaction Thiol-dependent hydrolysis of ester, thioester, amide, peptide and isopeptide bonds formed by the C-terminal Gly of ubiquitin (a 76-residue protein attached to proteins as an intracellular targeting signal).. Inhibited by the diterpenoid derivative 15-oxospiramilactone (S3). Deubiquitinating enzyme tethered to the mitochondrial outer membrane that acts as a key inhibitor of mitophagy by counteracting the action of parkin (PRKN): hydrolyzes ubiquitin attached by parkin on target proteins, such as RHOT1/MIRO1 and TOMM20, thereby blocking parkin's ability to drive mitophagy. Preferentially cleaves 'Lys-6'- and 'Lys-11'-linked polyubiquitin chains, 2 types of linkage that participate in mitophagic signaling. Does not cleave efficiently polyubiquitin phosphorylated at 'Ser-65'. Acts as a negative regulator of mitochondrial fusion by mediating deubiquitination of MFN1 and MFN2. The chain is Ubiquitin carboxyl-terminal hydrolase 30 from Homo sapiens (Human).